The chain runs to 79 residues: MPVAVGPYGQSQPSCFDRVKMGFVMGCAVGMAAGALFGPFSCLRIGMRGRELMGGIGKTMMQSGGTFGPFMAIGMGIRC.

The helical transmembrane segment at 22–44 threads the bilayer; it reads GFVMGCAVGMAAGALFGPFSCLR. Residues 42-60 form a sufficient for antibacterial activity region; that stretch reads CLRIGMRGRELMGGIGKTM.

Belongs to the MGR2 family.

It localises to the mitochondrion inner membrane. Functionally, has antibacterial activity against a variety of bacteria including S.aureus, P.aeruginosa and M.tuberculosis. Acts by inducing bacterial membrane breakage. Its function is as follows. Induces production of reactive oxygen species (ROS) which are necessary for cell proliferation. May play a role in inducing oxidative DNA damage and replicative senescence. May play a role in the coordination of mitochondrial morphology and cell proliferation. The polypeptide is Reactive oxygen species modulator 1 (ROMO1) (Sus scrofa (Pig)).